The chain runs to 207 residues: MPLPDFRLIRLLPLAALVLTACSVTTPKGPGKSPDSPQWRQHQQDVRNLNQYQTRGAFAYISDQQKVYARFFWQQTGQDRYRLLLTNPLGSTELELNAQPGNVQLVDNKGQRYTSDDAEEMIGKLTGMPIPLNSLRQWILGLPGDATDYKLDDQYRLSEITYSQNGKNWKVVYGGYDTKTQPAMPANMELTDGGQRIKLKMDNWVVK.

The signal sequence occupies residues 1-21; sequence MPLPDFRLIRLLPLAALVLTA. C22 carries the N-palmitoyl cysteine lipid modification. Residue C22 is the site of S-diacylglycerol cysteine attachment.

This sequence belongs to the LolB family. As to quaternary structure, monomer.

Its subcellular location is the cell outer membrane. Functionally, plays a critical role in the incorporation of lipoproteins in the outer membrane after they are released by the LolA protein. This is Outer-membrane lipoprotein LolB from Escherichia coli O127:H6 (strain E2348/69 / EPEC).